Here is a 229-residue protein sequence, read N- to C-terminus: ADP-ribosylation factor-like protein 6-interacting protein 4 (229 aa).

Positions 1-20 are enriched in basic residues; the sequence is MAHVGSRKRSRSRSRSRSGR. A disordered region spans residues 1-152; that stretch reads MAHVGSRKRS…EDNDGPVLTD (152 aa). Over residues 21–35 the composition is skewed to basic and acidic residues; that stretch reads RGSEKRSKRSSKDAS. The segment covering 66–87 has biased composition (low complexity); that stretch reads SRSSSTSSSSSSSSSASSSSSS. A compositionally biased stretch (basic residues) spans 90–117; that stretch reads RKKRAKHKEKKRKKKKKKRKKKLKKRVK. Residues Ser140 and Ser174 each carry the phosphoserine modification. Lys191 participates in a covalent cross-link: Glycyl lysine isopeptide (Lys-Gly) (interchain with G-Cter in SUMO2).

The protein belongs to the ARL6IP4 family. As to quaternary structure, interacts with ZCCHC17. Interacts with SRSF2. Interacts with ARL6. As to expression, widely expressed. Expressed at high level in testis and thymus.

It localises to the nucleus. The protein localises to the nucleolus. It is found in the nucleus speckle. Its function is as follows. Involved in modulating alternative pre-mRNA splicing with either 5' distal site activation or preferential use of 3' proximal site. The protein is ADP-ribosylation factor-like protein 6-interacting protein 4 (Arl6ip4) of Mus musculus (Mouse).